The sequence spans 676 residues: XK-related protein 5 (676 aa).

7 helical membrane passes run 37 to 57 (WLAL…FLWF), 114 to 134 (LLEA…VFLA), 140 to 160 (IVPG…LVSY), 206 to 226 (VWVL…LVAQ), 239 to 259 (LFNL…WDSP), 266 to 286 (SFYL…TDFL), and 294 to 314 (LWTV…LVIY). Disordered stretches follow at residues 336–362 (PIED…DSSS), 372–391 (TSLD…GLGE), 495–538 (LEDN…KEGQ), and 598–661 (PIPG…IQRD). The segment covering 498 to 509 (NATTQKPPATQE) has biased composition (polar residues).

The protein belongs to the XK family.

The protein localises to the cell membrane. The chain is XK-related protein 5 from Mus musculus (Mouse).